A 757-amino-acid polypeptide reads, in one-letter code: Polyribonucleotide nucleotidyltransferase (757 aa).

Mg(2+) is bound by residues Asp532 and Asp538. The 60-residue stretch at 598–657 folds into the KH domain; sequence PRVTAIKVPVDKIGEVIGPKGKMINSITEQTGANISIEDDGTVFVGATDGPSAQAAIDMI. The S1 motif domain maps to 669–738; that stretch reads GERFLGTVVK…NRGKISLIPV (70 aa).

Belongs to the polyribonucleotide nucleotidyltransferase family. Requires Mg(2+) as cofactor.

It is found in the cytoplasm. It carries out the reaction RNA(n+1) + phosphate = RNA(n) + a ribonucleoside 5'-diphosphate. Involved in mRNA degradation. Catalyzes the phosphorolysis of single-stranded polyribonucleotides processively in the 3'- to 5'-direction. This chain is Polyribonucleotide nucleotidyltransferase, found in Rhodococcus jostii (strain RHA1).